The following is a 581-amino-acid chain: Putative aluminum-activated malate transporter 3 (581 aa).

Helical transmembrane passes span M98–L118, Y122–S142, G148–I164, M167–A187, Y201–Y218, and F231–I251.

It belongs to the aromatic acid exporter (TC 2.A.85) family.

The protein resides in the membrane. In terms of biological role, malate transporter. The chain is Putative aluminum-activated malate transporter 3 (ALMT3) from Arabidopsis thaliana (Mouse-ear cress).